Here is a 513-residue protein sequence, read N- to C-terminus: Xylose import ATP-binding protein XylG (513 aa).

ABC transporter domains are found at residues L5–E242 and L259–E505. G37–S44 contacts ATP.

Belongs to the ABC transporter superfamily. Xylose importer (TC 3.A.1.2.4) family. In terms of assembly, the complex is composed of two ATP-binding proteins (XylG), two transmembrane proteins (XylH) and a solute-binding protein (XylF).

Its subcellular location is the cell inner membrane. The catalysed reaction is D-xylose(out) + ATP + H2O = D-xylose(in) + ADP + phosphate + H(+). Functionally, part of the ABC transporter complex XylFGH involved in xylose import. Responsible for energy coupling to the transport system. This chain is Xylose import ATP-binding protein XylG, found in Shigella boydii serotype 4 (strain Sb227).